The sequence spans 233 residues: Aspartate/glutamate leucyltransferase (233 aa).

This sequence belongs to the R-transferase family. Bpt subfamily.

The protein localises to the cytoplasm. The enzyme catalyses N-terminal L-glutamyl-[protein] + L-leucyl-tRNA(Leu) = N-terminal L-leucyl-L-glutamyl-[protein] + tRNA(Leu) + H(+). The catalysed reaction is N-terminal L-aspartyl-[protein] + L-leucyl-tRNA(Leu) = N-terminal L-leucyl-L-aspartyl-[protein] + tRNA(Leu) + H(+). In terms of biological role, functions in the N-end rule pathway of protein degradation where it conjugates Leu from its aminoacyl-tRNA to the N-termini of proteins containing an N-terminal aspartate or glutamate. The sequence is that of Aspartate/glutamate leucyltransferase from Vibrio cholerae serotype O1 (strain ATCC 39315 / El Tor Inaba N16961).